Reading from the N-terminus, the 670-residue chain is Transketolase, chromosomal (670 aa).

Histidine 32 is a substrate binding site. Thiamine diphosphate-binding positions include histidine 72 and 120–122 (GPL). A Mg(2+)-binding site is contributed by aspartate 161. Thiamine diphosphate-binding residues include glycine 162 and asparagine 191. 2 residues coordinate Mg(2+): asparagine 191 and isoleucine 193. Substrate is bound by residues histidine 267, arginine 364, and serine 391. Histidine 267 is a thiamine diphosphate binding site. Residue glutamate 417 is the Proton donor of the active site. Residue phenylalanine 443 coordinates thiamine diphosphate. Substrate contacts are provided by histidine 467, aspartate 475, and arginine 526.

It belongs to the transketolase family. Homodimer. The cofactor is Mg(2+). Requires Ca(2+) as cofactor. It depends on Mn(2+) as a cofactor. Co(2+) is required as a cofactor. Thiamine diphosphate serves as cofactor.

It catalyses the reaction D-sedoheptulose 7-phosphate + D-glyceraldehyde 3-phosphate = aldehydo-D-ribose 5-phosphate + D-xylulose 5-phosphate. It participates in carbohydrate biosynthesis; Calvin cycle. Functionally, catalyzes the transfer of a two-carbon ketol group from a ketose donor to an aldose acceptor, via a covalent intermediate with the cofactor thiamine pyrophosphate. The protein is Transketolase, chromosomal (cbbTC) of Cupriavidus necator (strain ATCC 17699 / DSM 428 / KCTC 22496 / NCIMB 10442 / H16 / Stanier 337) (Ralstonia eutropha).